A 760-amino-acid polypeptide reads, in one-letter code: DEAD-box ATP-dependent RNA helicase 24 (760 aa).

Disordered stretches follow at residues 1–76 (MSNR…GEVD) and 90–113 (QEMK…DDDD). The segment covering 14-27 (NRQTSYSFERSQAP) has biased composition (polar residues). Positions 41–64 (NSEDADLDNIDYMENEEAEEDIEE) are enriched in acidic residues. Positions 99–109 (KPKEKLERYKD) are enriched in basic and acidic residues. Serine 160 carries the phosphoserine modification. A Q motif motif is present at residues 228 to 256 (KTFEDCGFSSQIMSAIKKQAYEKPTAIQC). The 176-residue stretch at 259–434 (LPIVLSGRDV…REILSDPIRV (176 aa)) folds into the Helicase ATP-binding domain. An ATP-binding site is contributed by 272–279 (AKTGSGKT). The DEAD box signature appears at 382 to 385 (DEAD). The Helicase C-terminal domain occupies 459 to 608 (KLPWLLEKLP…NVPPELTDLA (150 aa)). Disordered regions lie at residues 604-638 (LTDL…KGVR), 647-666 (GFSS…SRSG), and 706-760 (FVSG…GWDN). Residues 615-628 (KSKRDGRKGGKKGR) show a composition bias toward basic residues. Over residues 629–638 (GGGGGNKGVR) the composition is skewed to gly residues. Polar residues predominate over residues 649 to 666 (SSESSRTPSSKAAPSRSG). Residues 707–716 (VSGGTIGGDM) show a composition bias toward gly residues. The span at 718–732 (RTQSQAPPVAPTQNA) shows a compositional bias: polar residues. Residues 733–745 (SSHNSSQNHSQSS) are compositionally biased toward low complexity. The segment covering 750–760 (RERKRRSGWDN) has biased composition (basic residues).

The protein belongs to the DEAD box helicase family.

It carries out the reaction ATP + H2O = ADP + phosphate + H(+). The sequence is that of DEAD-box ATP-dependent RNA helicase 24 (RH24) from Arabidopsis thaliana (Mouse-ear cress).